Reading from the N-terminus, the 242-residue chain is Probable transcriptional regulatory protein PG_0097 (242 aa).

This sequence belongs to the TACO1 family.

It is found in the cytoplasm. This is Probable transcriptional regulatory protein PG_0097 from Porphyromonas gingivalis (strain ATCC BAA-308 / W83).